The chain runs to 470 residues: MAGKTLYDKLWDMHEVKRRDDGSSLIYIDRQILHEVTSPQVRGAAPGRANVARGCQHRHPGPQRADHPGSPVGGRRHRRRNLAHPGADPGRELRRVRHRRVQDERPAPGHRPCGRPGAGRHLPGMTVVCGDSHTSTHWCGALAHGIGTSEVEHVLATQCLVAKKMKNMQVRVEGELPLGVSAKDIVLAVIGRIGTAGGTGHALEFAGSAIRGLSMEGRMTLCNMAIEAGARVGMVAVDEKTIDYVKGRPYAPQGADWDKAVAQWRELVSDADAGFDTVVELKAEEIRPQVTWGTSPEMVLPVDERVPDPASESDPVKRDSIVRALKYMGLAANQPIGEIKVDRVFIGSCTNSRIEDLRAAAEVAKGARSPRASSRRWWCRAPGWSRSRRRRRGWTGSSSRPVSSGATGCSMCLAMNPDRLESGEHCASTSNRNFEGRQGAGGRTHLVSPAMAAAAAVAGRFVDVRQLLQA.

The tract at residues 50-121 (NVARGCQHRH…PCGRPGAGRH (72 aa)) is disordered. [4Fe-4S] cluster contacts are provided by C349, C409, and C412.

The protein belongs to the aconitase/IPM isomerase family. LeuC type 1 subfamily. Heterodimer of LeuC and LeuD. It depends on [4Fe-4S] cluster as a cofactor.

The enzyme catalyses (2R,3S)-3-isopropylmalate = (2S)-2-isopropylmalate. The protein operates within amino-acid biosynthesis; L-leucine biosynthesis; L-leucine from 3-methyl-2-oxobutanoate: step 2/4. Its function is as follows. Catalyzes the isomerization between 2-isopropylmalate and 3-isopropylmalate, via the formation of 2-isopropylmaleate. This chain is 3-isopropylmalate dehydratase large subunit, found in Azotobacter vinelandii.